Consider the following 489-residue polypeptide: Glucose-6-phosphate 1-dehydrogenase (489 aa).

The NADP(+) site is built by Arg50 and Lys151. Substrate contacts are provided by His181, Lys185, Glu219, and Asp238. Catalysis depends on His243, which acts as the Proton acceptor. Substrate-binding residues include Lys341 and Lys346.

It belongs to the glucose-6-phosphate dehydrogenase family. As to quaternary structure, homodimer.

It carries out the reaction D-glucose 6-phosphate + NADP(+) = 6-phospho-D-glucono-1,5-lactone + NADPH + H(+). It participates in carbohydrate degradation; pentose phosphate pathway; D-ribulose 5-phosphate from D-glucose 6-phosphate (oxidative stage): step 1/3. Functionally, catalyzes the oxidation of glucose 6-phosphate to 6-phosphogluconolactone. The sequence is that of Glucose-6-phosphate 1-dehydrogenase from Gluconobacter oxydans (strain 621H) (Gluconobacter suboxydans).